The sequence spans 500 residues: Protein dcd1B (500 aa).

A signal peptide spans 1–20 (MNLIKLFIICCLLISITVKS). N284, N331, N441, N459, N474, and N475 each carry an N-linked (GlcNAc...) asparagine glycan. The disordered stretch occupies residues 464-500 (FSEQPPLPPPNNSSSSDSNSNSNSDSSSSSDSNSNSN). Residues 475–500 (NSSSSDSNSNSNSDSSSSSDSNSNSN) show a composition bias toward low complexity.

The protein resides in the secreted. The sequence is that of Protein dcd1B (dcd1B) from Dictyostelium discoideum (Social amoeba).